We begin with the raw amino-acid sequence, 394 residues long: MKSGNSEPNLMETHTDETKLQNTQVKRKRRLTALTLLFALSAAAAGSAFFLWWQHEEETEDAYVAGRVVQVTPQKGGTVRKVLHDDTDAVKKGDVLAVLDDDNDVLAYERAKNELVQAVRQNRRQNAATSQAGAQVALRRADLARAQDDLRRRSALAESGAVSAEELAHARTAVSQAQAAVKAALAEESSARAALGGDVSLREQPEVQTAIGRLKDAWLNLRRTQVRAPADGQVAKRSVQVGQQVAAGAPLMAVVPLSDVWVDANFKETQLRHMKIGQPAELVSDLYGKQIVYRGRVAGFSAGTGSAFSLIPAQNATGNWIKVVQRVPVRIVLNREDVDRHPLRIGLSMTVKVDTSAAGAPVSKTPGAALPEMESTDWSEVDRTVDEILGQSAP.

The interval 1–23 (MKSGNSEPNLMETHTDETKLQNT) is disordered. The chain crosses the membrane as a helical span at residues 33–53 (ALTLLFALSAAAAGSAFFLWW). Positions 356-376 (SAAGAPVSKTPGAALPEMEST) are disordered.

It belongs to the membrane fusion protein (MFP) (TC 8.A.1) family. In terms of assembly, probably part of a tripartite efflux system FarAB-MtrE, which is composed of an inner membrane transporter, FarB, a periplasmic membrane fusion protein, FarA, and an outer membrane component, MtrE.

The protein localises to the cell inner membrane. In terms of biological role, mediates resistance to long-chained antibacterial fatty acids (FAs). Function is dependent on the MtrE outer membrane protein. This Neisseria gonorrhoeae protein is Fatty acid resistance protein FarA.